Here is an 86-residue protein sequence, read N- to C-terminus: Large ribosomal subunit protein bL31 (86 aa).

The disordered stretch occupies residues 66-86 (GMGSADSATSQETKEAKESDK). Residues 77–86 (ETKEAKESDK) show a composition bias toward basic and acidic residues.

Belongs to the bacterial ribosomal protein bL31 family. Type A subfamily. In terms of assembly, part of the 50S ribosomal subunit.

Binds the 23S rRNA. The chain is Large ribosomal subunit protein bL31 from Prochlorococcus marinus (strain MIT 9515).